We begin with the raw amino-acid sequence, 932 residues long: Protocadherin gamma-A12 (932 aa).

The signal sequence occupies residues 1-29 (MIPARLHRDYKGLVLLGILLGTLWETGCT). 6 consecutive Cadherin domains span residues 30-133 (QIRY…APYF), 134-242 (RESE…APAF), 243-347 (AQPE…APEV), 348-452 (VLTS…PPVF), 453-562 (PQAS…APEI), and 570-683 (DGST…SPAN). The Extracellular segment spans residues 30-692 (QIRYSVPEEL…NSETSDLTLY (663 aa)). 3 N-linked (GlcNAc...) asparagine glycosylation sites follow: N265, N419, and N545. The chain crosses the membrane as a helical span at residues 693-713 (LVVAVAAVSCVFLAFVILLLA). Residues 714–932 (LRLRRWHKSR…KKKSGKKEKK (219 aa)) are Cytoplasmic-facing. Disordered stretches follow at residues 803–841 (GHGL…WPNN) and 902–932 (ATLT…KEKK). A compositionally biased stretch (polar residues) spans 816 to 841 (WRFSQAQRPGTSGSQNGDDTGTWPNN). The span at 922-932 (NKKKSGKKEKK) shows a compositional bias: basic residues.

Its subcellular location is the cell membrane. Functionally, potential calcium-dependent cell-adhesion protein. May be involved in the establishment and maintenance of specific neuronal connections in the brain. In Pan troglodytes (Chimpanzee), this protein is Protocadherin gamma-A12 (PCDHGA12).